The chain runs to 603 residues: Protein SHORT-ROOT 2 (603 aa).

Disordered stretches follow at residues 11 to 58 (HHHH…HSHS) and 106 to 140 (DFSS…SSAG). Positions 31-44 (SYPSSRGSTSSPSS) are enriched in low complexity. The span at 45–58 (HHTHNHTYYHHSHS) shows a compositional bias: basic residues. Residues 108–125 (SSSSSSRQFHSGTGAPSS) are compositionally biased toward low complexity. Residues 179-602 (AAPSSSGRWA…QPVVWASAWK (424 aa)) form the GRAS domain. A leucine repeat I (LRI) region spans residues 186–249 (RWAAQLLMEC…LTTSGPRTLR (64 aa)). Residues 268–354 (ALKFQELSPW…DTPHLSITTV (87 aa)) are VHIID. The short motif at 318–322 (LHILD) is the VHIID element. The interval 370–406 (EIGQRLEKFARLMGVPFSFRAVHHAGDLADLDLAALD) is leucine repeat II (LRII). The segment at 416–514 (LAVNCVNALR…ERAVGRAIVD (99 aa)) is PFYRE. An SAW region spans residues 517 to 602 (SCPASQSAER…QPVVWASAWK (86 aa)).

It belongs to the GRAS family. As to quaternary structure, does not interact with SCR1.

The protein resides in the nucleus. Putative transcription factor involved in asymmetric cell division. The polypeptide is Protein SHORT-ROOT 2 (SHR2) (Oryza sativa subsp. indica (Rice)).